The chain runs to 348 residues: Phosphoribosylformylglycinamidine cyclo-ligase (348 aa).

It belongs to the AIR synthase family.

Its subcellular location is the cytoplasm. The enzyme catalyses 2-formamido-N(1)-(5-O-phospho-beta-D-ribosyl)acetamidine + ATP = 5-amino-1-(5-phospho-beta-D-ribosyl)imidazole + ADP + phosphate + H(+). It participates in purine metabolism; IMP biosynthesis via de novo pathway; 5-amino-1-(5-phospho-D-ribosyl)imidazole from N(2)-formyl-N(1)-(5-phospho-D-ribosyl)glycinamide: step 2/2. This chain is Phosphoribosylformylglycinamidine cyclo-ligase, found in Ruegeria pomeroyi (strain ATCC 700808 / DSM 15171 / DSS-3) (Silicibacter pomeroyi).